Consider the following 176-residue polypeptide: Peptide deformylase (176 aa).

Fe cation is bound by residues Cys95 and His137. The active site involves Glu138. A Fe cation-binding site is contributed by His141.

It belongs to the polypeptide deformylase family. Fe(2+) is required as a cofactor.

The enzyme catalyses N-terminal N-formyl-L-methionyl-[peptide] + H2O = N-terminal L-methionyl-[peptide] + formate. Its function is as follows. Removes the formyl group from the N-terminal Met of newly synthesized proteins. Requires at least a dipeptide for an efficient rate of reaction. N-terminal L-methionine is a prerequisite for activity but the enzyme has broad specificity at other positions. This is Peptide deformylase from Hyphomonas neptunium (strain ATCC 15444).